The sequence spans 798 residues: Nuclear cap-binding protein subunit 1 (798 aa).

The 214-residue stretch at 28-241 (EKKLQGVIGK…SLSAQIEALR (214 aa)) folds into the MIF4G domain. The interval 663-686 (NKIKEEDDEESDIKMDEDETKEEK) is disordered. Acidic residues predominate over residues 668-682 (EDDEESDIKMDEDET).

It belongs to the NCBP1 family. In terms of assembly, component of the nuclear cap-binding complex (CBC), a heterodimer composed of ncbp-1 and ncbp-1 that interacts with m7GpppG-capped RNA.

The protein localises to the nucleus. In terms of biological role, component of the cap-binding complex (CBC), which binds cotranscriptionally to the 5'-cap of pre-mRNAs and is involved in various processes such as pre-mRNA splicing and RNA-mediated gene silencing (RNAi). The CBC complex is involved in miRNA-mediated RNA interference and is required for primary microRNAs (miRNAs) processing. In the CBC complex, ncbp-1 does not bind directly capped RNAs (m7GpppG-capped RNA) but is required to stabilize the movement of the N-terminal loop of ncbp-2 and lock the CBC into a high affinity cap-binding state with the cap structure. The sequence is that of Nuclear cap-binding protein subunit 1 (ncbp-1) from Caenorhabditis elegans.